A 440-amino-acid polypeptide reads, in one-letter code: Trigger factor (440 aa).

In terms of domain architecture, PPIase FKBP-type spans 161 to 257 (GDYVKLAYEG…VLEVRERVLP (97 aa)).

The protein belongs to the FKBP-type PPIase family. Tig subfamily.

It localises to the cytoplasm. The enzyme catalyses [protein]-peptidylproline (omega=180) = [protein]-peptidylproline (omega=0). Its function is as follows. Involved in protein export. Acts as a chaperone by maintaining the newly synthesized protein in an open conformation. Functions as a peptidyl-prolyl cis-trans isomerase. This Opitutus terrae (strain DSM 11246 / JCM 15787 / PB90-1) protein is Trigger factor.